The chain runs to 85 residues: MKTFSVAVAVAVVLAFICLQESSAVPANEEQELEQQIYFADPEMPVESCKMPYYMRENRQGSPARCRFCCRCCPRMRGCGICCRF.

An N-terminal signal peptide occupies residues 1 to 24 (MKTFSVAVAVAVVLAFICLQESSA). The propeptide occupies 25–64 (VPANEEQELEQQIYFADPEMPVESCKMPYYMRENRQGSPA). Intrachain disulfides connect C66–C83, C69–C72, C70–C79, and C73–C82.

In terms of assembly, monomer. In terms of tissue distribution, expressed in all tissues tested, with highest levels of expression in kidney and lowest levels in liver. Intra-peritoneal injection of lipopolysaccharide results in increased expression in heart, spleen and stomach, but not in kidney or liver.

It localises to the secreted. Seems to act as a signaling molecule involved in the maintenance of iron homeostasis. Seems to be required in conjunction with HFE to regulate both intestinal iron absorption and iron storage in macrophages. Its function is as follows. Has very strong antibacterial activity against the marine Gram-negative bacteria V.alginolyticus (MIC=24 uM), V.fluvialis, V.harveyis (MIC=12 uM) and V.parahaemolyticus (MIC=6 uM). Has antibacterial activity against the Gram-negative bacteria A.hydrophila (MIC=6 uM), E.coli (MIC=24 uM), and E.coli BL21(DE3)plysS (MIC=6 uM), and the Gram-positive bacteria B.cereus (MIC=24 uM), B.subtilis (MIC=6 uM), C.glutamicum (MIC=3 uM), M.luteus (MIC=3 uM), M.lysodeikticus, S.aureus (MIC=6 uM) and S.epidermis (MIC=12 uM). Possesses antifungal activity against A.niger (MIC=24 uM), F.graminearum (MIC24 uM) and F.solani (MIC=24 uM), but lacks antifungal activity against the yeasts P.pastoris GS115 and C.albicans. The chain is Hepcidin from Larimichthys crocea (Large yellow croaker).